The sequence spans 536 residues: uncharacterized protein (536 aa).

The 232-residue stretch at 163 to 394 (LDAYDSMSVQ…MNFIPTRPLE (232 aa)) folds into the Radical SAM core domain. [4Fe-4S] cluster-binding residues include C177, C181, and C184.

It depends on [4Fe-4S] cluster as a cofactor.

This is an uncharacterized protein from Synechocystis sp. (strain ATCC 27184 / PCC 6803 / Kazusa).